Here is an 83-residue protein sequence, read N- to C-terminus: UPF0512 protein G (83 aa).

The protein belongs to the UPF0512 family.

This is UPF0512 protein G from Dictyostelium discoideum (Social amoeba).